The chain runs to 704 residues: DNA ligase (704 aa).

Residues 58 to 62, 107 to 108, and E138 each bind NAD(+); these read DYEYD and SL. The N6-AMP-lysine intermediate role is filled by K140. NAD(+) is bound by residues R161, E199, K323, and K347. 4 residues coordinate Zn(2+): C441, C444, C459, and C464. Residues 621 to 704 form the BRCT domain; that stretch reads EKKGKLAGLN…LKLIGGENTE (84 aa).

It belongs to the NAD-dependent DNA ligase family. LigA subfamily. It depends on Mg(2+) as a cofactor. Mn(2+) is required as a cofactor.

The enzyme catalyses NAD(+) + (deoxyribonucleotide)n-3'-hydroxyl + 5'-phospho-(deoxyribonucleotide)m = (deoxyribonucleotide)n+m + AMP + beta-nicotinamide D-nucleotide.. Functionally, DNA ligase that catalyzes the formation of phosphodiester linkages between 5'-phosphoryl and 3'-hydroxyl groups in double-stranded DNA using NAD as a coenzyme and as the energy source for the reaction. It is essential for DNA replication and repair of damaged DNA. This Sulfurihydrogenibium sp. (strain YO3AOP1) protein is DNA ligase.